Here is a 625-residue protein sequence, read N- to C-terminus: MMTPGKSSKTPIVGNLTTLGITIPDTVTSIGFKTFYGCSSFTSIIIPNSVTSIGTKAFTGCSSLTSITIGNSVTSFGQEAFSECSSITSITIPNSVTTIRDFAFSGCSKLTSITIPNSVTSLGSHAFRGCSGLTSIIIPDSVTLIRGSIFYGCSSLTSITIPNSVTSIYSSAFYGCSSLTSITIPDSVLDFGSAAFQECSKLTNIKIGNNVDSIGSLAFKRCSSLTNITIPDSVTTIANSAFYECSKLTSITIGKSVTRIEGNAFSKCYSLTSITIKTTNDITSSITTDVFLNCPITELIYETTGLTFLTYEYFKDKVTLIKFNIPKSDSNSMIRLQEITSLPTLTHFTNLNKVTIENINELTIPESFIEGDNFEILITNNIKSIDPNAFKDCSINKFTYLGTDKLENDFLKNAKSCEEVITSTKYSDNEIGGMTITHKQSEENPNQPGENPNQPGENPNQPGENPNQPGENPSQPGENPSQPGENPNQPGENPSQPGENPNQPGENPNQPGENPNQPGENPSQPGENTDDPSKSKENKAIKGGEIAGIIIGSLIGICLVVAICFGVYYYFMRIKPKNKNDDNEGNQEDTIANGTNEVTNENVLATFDEQPNNESDSNGLDSAEV.

Topologically, residues 1–548 are extracellular; it reads MMTPGKSSKT…KAIKGGEIAG (548 aa). N-linked (GlcNAc...) asparagine glycosylation occurs at asparagine 15. LRR repeat units lie at residues 38-60, 61-83, 85-106, 107-129, 153-175, 176-198, 200-221, 222-245, 247-267, 271-293, 325-347, 348-368, and 369-392; these read CSSF…AFTG, CSSL…AFSE, SSIT…AFSG, CSKL…AFRG, CSSL…AFYG, CSSL…AFQE, SKLT…AFKR, CSSL…FYEC, KLTS…AFSK, LTSI…VFLN, IPKS…TLTH, FTNL…PESF, and IEGD…AFKD. N-linked (GlcNAc...) asparagine glycosylation occurs at asparagine 227. The disordered stretch occupies residues 439–538; the sequence is KQSEENPNQP…TDDPSKSKEN (100 aa). The span at 443–526 shows a compositional bias: low complexity; it reads ENPNQPGENP…QPGENPSQPG (84 aa). The helical transmembrane segment at 549–571 threads the bilayer; sequence IIIGSLIGICLVVAICFGVYYYF. Over 572–625 the chain is Cytoplasmic; that stretch reads MRIKPKNKNDDNEGNQEDTIANGTNEVTNENVLATFDEQPNNESDSNGLDSAEV. Residues 577–625 form a disordered region; sequence KNKNDDNEGNQEDTIANGTNEVTNENVLATFDEQPNNESDSNGLDSAEV. Polar residues predominate over residues 588–625; sequence EDTIANGTNEVTNENVLATFDEQPNNESDSNGLDSAEV.

It is found in the cell membrane. In terms of biological role, may bind host tissue. The protein is Putative surface protein bspA-like (BSPAL1) of Trichomonas vaginalis.